Here is a 333-residue protein sequence, read N- to C-terminus: Tetraacyldisaccharide 4'-kinase (333 aa).

60–67 contributes to the ATP binding site; sequence TVGGTGKT.

It belongs to the LpxK family.

It catalyses the reaction a lipid A disaccharide + ATP = a lipid IVA + ADP + H(+). The protein operates within glycolipid biosynthesis; lipid IV(A) biosynthesis; lipid IV(A) from (3R)-3-hydroxytetradecanoyl-[acyl-carrier-protein] and UDP-N-acetyl-alpha-D-glucosamine: step 6/6. Its function is as follows. Transfers the gamma-phosphate of ATP to the 4'-position of a tetraacyldisaccharide 1-phosphate intermediate (termed DS-1-P) to form tetraacyldisaccharide 1,4'-bis-phosphate (lipid IVA). The sequence is that of Tetraacyldisaccharide 4'-kinase from Azotobacter vinelandii (strain DJ / ATCC BAA-1303).